The primary structure comprises 253 residues: Putative glutamine amidotransferase PB2B2.05 (253 aa).

Positions 5–228 (IIALSVGFSN…INRSKWHMKQ (224 aa)) constitute a Glutamine amidotransferase type-1 domain. The Nucleophile role is filled by Cys-100. Active-site residues include His-200 and Glu-202.

It localises to the cytoplasm. Its subcellular location is the nucleus. The sequence is that of Putative glutamine amidotransferase PB2B2.05 from Schizosaccharomyces pombe (strain 972 / ATCC 24843) (Fission yeast).